Here is a 187-residue protein sequence, read N- to C-terminus: Large ribosomal subunit protein uL5 (187 aa).

Belongs to the universal ribosomal protein uL5 family. In terms of assembly, part of the 50S ribosomal subunit; part of the 5S rRNA/L5/L18/L25 subcomplex. Contacts the 5S rRNA and the P site tRNA. Forms a bridge to the 30S subunit in the 70S ribosome.

Functionally, this is one of the proteins that bind and probably mediate the attachment of the 5S RNA into the large ribosomal subunit, where it forms part of the central protuberance. In the 70S ribosome it contacts protein S13 of the 30S subunit (bridge B1b), connecting the 2 subunits; this bridge is implicated in subunit movement. Contacts the P site tRNA; the 5S rRNA and some of its associated proteins might help stabilize positioning of ribosome-bound tRNAs. The polypeptide is Large ribosomal subunit protein uL5 (Mycobacterium bovis (strain BCG / Tokyo 172 / ATCC 35737 / TMC 1019)).